The following is an 835-amino-acid chain: Ribosome-releasing factor 2, mitochondrial (835 aa).

The transit peptide at 1–50 (MPWCNTRLRTCGASPKIFLRRVRCPVLLHNWTIGRVSSVSKMILRFLRSY) directs the protein to the mitochondrion. Residues 57-343 (TRVRNIGIIA…AVVDYLPSPA (287 aa)) form the tr-type G domain. GTP is bound by residues 66–73 (AHIDAGKT), 131–135 (DTPGH), and 183–186 (NKMD).

This sequence belongs to the TRAFAC class translation factor GTPase superfamily. Classic translation factor GTPase family. EF-G/EF-2 subfamily.

Its subcellular location is the mitochondrion. Its function is as follows. Mitochondrial GTPase that mediates the disassembly of ribosomes from messenger RNA at the termination of mitochondrial protein biosynthesis. Not involved in the GTP-dependent ribosomal translocation step during translation elongation. The polypeptide is Ribosome-releasing factor 2, mitochondrial (Eremothecium gossypii (strain ATCC 10895 / CBS 109.51 / FGSC 9923 / NRRL Y-1056) (Yeast)).